Here is a 506-residue protein sequence, read N- to C-terminus: Maturase K (506 aa).

It belongs to the intron maturase 2 family. MatK subfamily.

It localises to the plastid. The protein resides in the chloroplast. Functionally, usually encoded in the trnK tRNA gene intron. Probably assists in splicing its own and other chloroplast group II introns. The protein is Maturase K of Calluna vulgaris (Heather).